A 957-amino-acid polypeptide reads, in one-letter code: Glycine dehydrogenase (decarboxylating) (957 aa).

At Lys708 the chain carries N6-(pyridoxal phosphate)lysine.

It belongs to the GcvP family. The glycine cleavage system is composed of four proteins: P, T, L and H. Pyridoxal 5'-phosphate is required as a cofactor.

The catalysed reaction is N(6)-[(R)-lipoyl]-L-lysyl-[glycine-cleavage complex H protein] + glycine + H(+) = N(6)-[(R)-S(8)-aminomethyldihydrolipoyl]-L-lysyl-[glycine-cleavage complex H protein] + CO2. The glycine cleavage system catalyzes the degradation of glycine. The P protein binds the alpha-amino group of glycine through its pyridoxal phosphate cofactor; CO(2) is released and the remaining methylamine moiety is then transferred to the lipoamide cofactor of the H protein. In Salmonella arizonae (strain ATCC BAA-731 / CDC346-86 / RSK2980), this protein is Glycine dehydrogenase (decarboxylating).